The following is a 268-amino-acid chain: Tryptophan synthase alpha chain (268 aa).

Active-site proton acceptor residues include Glu-49 and Asp-60.

Belongs to the TrpA family. In terms of assembly, tetramer of two alpha and two beta chains.

It carries out the reaction (1S,2R)-1-C-(indol-3-yl)glycerol 3-phosphate + L-serine = D-glyceraldehyde 3-phosphate + L-tryptophan + H2O. Its pathway is amino-acid biosynthesis; L-tryptophan biosynthesis; L-tryptophan from chorismate: step 5/5. Functionally, the alpha subunit is responsible for the aldol cleavage of indoleglycerol phosphate to indole and glyceraldehyde 3-phosphate. This Shigella boydii serotype 4 (strain Sb227) protein is Tryptophan synthase alpha chain.